A 337-amino-acid polypeptide reads, in one-letter code: LIX1-like protein (337 aa).

A disordered region spans residues 1–55; that stretch reads METMRAQRLQPGVGVGGRGTLRALRPGVTGAPTSAATPPVGPPPAPPPPAPPLPP. A compositionally biased stretch (low complexity) spans 26-38; that stretch reads PGVTGAPTSAATP. The span at 39-55 shows a compositional bias: pro residues; that stretch reads PVGPPPAPPPPAPPLPP.

It belongs to the LIX1 family.

This Mus musculus (Mouse) protein is LIX1-like protein (Lix1l).